We begin with the raw amino-acid sequence, 181 residues long: Oligoribonuclease (181 aa).

Residues 8-171 (LVWLDMEMTG…ADIYESIDEL (164 aa)) enclose the Exonuclease domain. Residue Tyr-129 is part of the active site.

This sequence belongs to the oligoribonuclease family.

The protein resides in the cytoplasm. In terms of biological role, 3'-to-5' exoribonuclease specific for small oligoribonucleotides. The protein is Oligoribonuclease of Bordetella bronchiseptica (strain ATCC BAA-588 / NCTC 13252 / RB50) (Alcaligenes bronchisepticus).